The primary structure comprises 619 residues: Probable Xaa-Pro aminopeptidase P (619 aa).

Mn(2+)-binding residues include Asp-416, Asp-427, Glu-525, and Glu-539.

This sequence belongs to the peptidase M24B family. Mn(2+) is required as a cofactor.

It catalyses the reaction Release of any N-terminal amino acid, including proline, that is linked to proline, even from a dipeptide or tripeptide.. Functionally, catalyzes the removal of a penultimate prolyl residue from the N-termini of peptides. This is Probable Xaa-Pro aminopeptidase P (AMPP) from Tuber melanosporum (strain Mel28) (Perigord black truffle).